We begin with the raw amino-acid sequence, 216 residues long: Large ribosomal subunit protein uL3 (216 aa).

Disordered stretches follow at residues 89 to 108 and 139 to 158; these read QRAS…VGGF and NTHG…QCQS. Glutamine 157 is modified (N5-methylglutamine).

This sequence belongs to the universal ribosomal protein uL3 family. In terms of assembly, part of the 50S ribosomal subunit. Forms a cluster with proteins L14 and L19. Post-translationally, methylated by PrmB.

In terms of biological role, one of the primary rRNA binding proteins, it binds directly near the 3'-end of the 23S rRNA, where it nucleates assembly of the 50S subunit. In Halorhodospira halophila (strain DSM 244 / SL1) (Ectothiorhodospira halophila (strain DSM 244 / SL1)), this protein is Large ribosomal subunit protein uL3.